A 122-amino-acid chain; its full sequence is MALKIRLARGGSKKRPYYHVVLADARSPRDGRFLENLGSWNPMLAKDDEKRVQLNAERIKHWLDNGAQPTDRVLRFLNEAGVAKREAKNNPIKAKPGKRAQERAAEKAQKAADAAAAADAAE.

Positions R85–E122 are disordered. Residues R99–K110 show a composition bias toward basic and acidic residues. A compositionally biased stretch (low complexity) spans A111 to E122.

This sequence belongs to the bacterial ribosomal protein bS16 family.

This is Small ribosomal subunit protein bS16 from Rhizobium etli (strain ATCC 51251 / DSM 11541 / JCM 21823 / NBRC 15573 / CFN 42).